We begin with the raw amino-acid sequence, 569 residues long: MALIATKISSRSCFVSAYPNNSPTFLISKFPNTVDSLSPANTAKRSILRNVHASVSNPSKQFHNKTSLEYLHELNIKKIKNILSANVDVPSENLEMIDVIQSLGIDLHFRQEIEQTLHMIYKEGLQFNGDLHEIALRFRLLRQEGHYVQEIIFKNILDKKGGFKDVVKNDVKGLTELFEASELRVEGEETLDGAREFTYSRLNELCSGRESHQKQEIMKSLAQPRHKTVRGLTSKRFTSMIKIAGQEDPEWLQSLLRVAEIDSIRLKSLTQGEMSQTFKWWTELGLEKDVEKARSQPLKWHTWSMKILQDPTLTEQRLDLTKPISLVYVIDDIFDVYGELEELTIFTRVVERWDHKGLKTLPKYMRVCFEALDMITTEISMKIYKSHGWNPTYALRQSWASLCKAFLVEAKWFNSGYLPTTEEYMKNGVVSSGVHLVMLHAYILLGEELTKEKVELIESNPGIVSSAATILRLWDDLGSAKDENQDGTDGSYVECYLNEYKGSTVDEARTHVAQKISRAWKRLNRECLNPCPFSRSFSKACLNIARTVPLMYSYDDDQRLPDEYLKSLM.

The N-terminal 39 residues, 1 to 39 (MALIATKISSRSCFVSAYPNNSPTFLISKFPNTVDSLSP), are a transit peptide targeting the chloroplast. (2E)-geranyl diphosphate-binding residues include Arg-294, Asp-331, Asp-335, Arg-472, and Asp-475. 2 residues coordinate Mg(2+): Asp-331 and Asp-335. The DDXXD motif motif lies at 331–335 (DDIFD). The Mg(2+) site is built by Asp-475, Ser-479, and Glu-483.

Belongs to the terpene synthase family. Tpsb subfamily. Mg(2+) is required as a cofactor. Requires Mn(2+) as cofactor. In terms of tissue distribution, predominantly expressed in flowers but also in stems and siliques.

The protein resides in the plastid. It localises to the chloroplast. It carries out the reaction (2E)-geranyl diphosphate + H2O = (S)-linalool + diphosphate. It functions in the pathway secondary metabolite biosynthesis; terpenoid biosynthesis. Functionally, involved in monoterpene (C10) biosynthesis. The major product is (S)-linalool. This is S-(+)-linalool synthase, chloroplastic from Arabidopsis thaliana (Mouse-ear cress).